Consider the following 272-residue polypeptide: AA9 family lytic polysaccharide monooxygenase G (272 aa).

The N-terminal stretch at 1-22 (MKGAGSASFLLTLLSTITRTSA) is a signal peptide. Residue H23 participates in Cu(2+) binding. A glycan (N-linked (GlcNAc...) asparagine) is linked at N60. Cystine bridges form between C78/C202 and C121/C125. H110 contacts Cu(2+). O2-binding residues include H188 and Q197. Y199 is a Cu(2+) binding site.

The protein belongs to the polysaccharide monooxygenase AA9 family. Cu(2+) serves as cofactor.

The protein resides in the secreted. The enzyme catalyses [(1-&gt;4)-beta-D-glucosyl]n+m + reduced acceptor + O2 = 4-dehydro-beta-D-glucosyl-[(1-&gt;4)-beta-D-glucosyl]n-1 + [(1-&gt;4)-beta-D-glucosyl]m + acceptor + H2O.. In terms of biological role, lytic polysaccharide monooxygenase (LPMO) that depolymerizes crystalline and amorphous polysaccharides via the oxidation of scissile alpha- or beta-(1-4)-glycosidic bonds, yielding C1 or C4 oxidation products. Catalysis by LPMOs requires the reduction of the active-site copper from Cu(II) to Cu(I) by a reducing agent and H(2)O(2) or O(2) as a cosubstrate. Acts preferentially on crystalline regions of cellulose such as highly crystalline algae cellulose. The polypeptide is AA9 family lytic polysaccharide monooxygenase G (Emericella nidulans (strain FGSC A4 / ATCC 38163 / CBS 112.46 / NRRL 194 / M139) (Aspergillus nidulans)).